Here is a 141-residue protein sequence, read N- to C-terminus: Cytochrome c-type biogenesis protein CcmE (141 aa).

Residues 1 to 7 (MQRKHKR) lie on the Cytoplasmic side of the membrane. Residues 8 to 28 (ILFVAVSFIALGCVSAFVLFE) traverse the membrane as a helical; Signal-anchor for type II membrane protein segment. Topologically, residues 29–141 (LSKSISFFCT…SSDAAVIGSS (113 aa)) are periplasmic. Residues H121 and Y125 each coordinate heme.

The protein belongs to the CcmE/CycJ family.

It is found in the cell inner membrane. Functionally, heme chaperone required for the biogenesis of c-type cytochromes. Transiently binds heme delivered by CcmC and transfers the heme to apo-cytochromes in a process facilitated by CcmF and CcmH. This Anaplasma phagocytophilum (strain HZ) protein is Cytochrome c-type biogenesis protein CcmE.